Here is a 335-residue protein sequence, read N- to C-terminus: Biotin synthase (335 aa).

The Radical SAM core domain occupies asparagine 51–arginine 278. The [4Fe-4S] cluster site is built by cysteine 66, cysteine 70, and cysteine 73. [2Fe-2S] cluster is bound by residues cysteine 110, cysteine 141, cysteine 201, and arginine 273.

Belongs to the radical SAM superfamily. Biotin synthase family. As to quaternary structure, homodimer. Requires [4Fe-4S] cluster as cofactor. It depends on [2Fe-2S] cluster as a cofactor.

It carries out the reaction (4R,5S)-dethiobiotin + (sulfur carrier)-SH + 2 reduced [2Fe-2S]-[ferredoxin] + 2 S-adenosyl-L-methionine = (sulfur carrier)-H + biotin + 2 5'-deoxyadenosine + 2 L-methionine + 2 oxidized [2Fe-2S]-[ferredoxin]. Its pathway is cofactor biosynthesis; biotin biosynthesis; biotin from 7,8-diaminononanoate: step 2/2. In terms of biological role, catalyzes the conversion of dethiobiotin (DTB) to biotin by the insertion of a sulfur atom into dethiobiotin via a radical-based mechanism. This Bordetella pertussis (strain Tohama I / ATCC BAA-589 / NCTC 13251) protein is Biotin synthase.